The sequence spans 119 residues: Divalent-cation tolerance protein CutA (119 aa).

C23, H90, and H91 together coordinate Cu cation.

It belongs to the CutA family. Homotrimer. Cu cation serves as cofactor.

The protein localises to the cytoplasm. Functionally, involved in resistance toward heavy metals. This is Divalent-cation tolerance protein CutA from Yersinia pseudotuberculosis serotype O:1b (strain IP 31758).